Reading from the N-terminus, the 396-residue chain is MLAVTSCSMKTVLQYAVFLGHSREVVCELVTSFRSFCSHCAVPPSPKYGGRHTVAMIPGDGIGPELMVHVKKIFRSNCVPVDFEEVWVTSTSNEEEINNALMAIRRNRVALKGNIATNHNLPARYKSHNTKFRTILDLYASVVHFKTFPGVMTRHKDIDILVVRENTEGEYTNLEHESVKGVVESLKIVTKTKSVRIADYAFKLAQKMGRKKVTVVHKANIMKLGDGLFLQCCKDVAAHYPQITLESMIIDNTTMQLVSKPQQFDVMVMPNLYGNIINSICTGLVGGSGIVPGANYGDSYAIFEMGSKEIGKDLAHRNIANPVAMLLTSCIMLDYLDLQPYATHIRSAVMASLQNKAVCTPDIGGQGNTASTVEYILHHMKEQTSGCHPNFFLQFT.

The transit peptide at 1–25 (MLAVTSCSMKTVLQYAVFLGHSREV) directs the protein to the mitochondrion. Threonine 117 is a citrate binding site. Arginine 133, arginine 164, and aspartate 251 together coordinate substrate. Aspartate 251 provides a ligand contact to Mn(2+). Position 321 (asparagine 321) interacts with ADP.

It belongs to the isocitrate and isopropylmalate dehydrogenases family. In terms of assembly, heterooligomer of subunits alpha (IDH3A), beta (IDH3B), and gamma (IDH3G) in the apparent ratio of 2:1:1. The heterodimer containing one IDH3A and one IDH3B subunit and the heterodimer containing one IDH3A and one IDH3G subunit assemble into a heterotetramer (which contains two subunits of IDH3A, one of IDH3B and one of IDH3G) and further into the heterooctamer. Requires Mg(2+) as cofactor. The cofactor is Mn(2+).

It localises to the mitochondrion. The heterotetramer and the heterodimer composed of IDH3A and IDH3G subunits can be allosterically activated by citrate (CIT) or/and ADP, and the two activators can act independently or synergistically. The heterodimer composed of IDH3A and IDH3B subunits cannot be allosterically regulated and the allosteric regulation of the heterotetramer is through the IDH3G subunit and not the IDH3B subunit. The IDH3G subunit contains the allosteric site which consists of a CIT-binding site and an ADP-binding site, and the binding of CIT and ADP causes conformational changes at the allosteric site which are transmitted to the active site in the catalytic subunit (IDH3A) through a cascade of conformational changes at the heterodimer interface, leading to stabilization of the isocitrate-binding at the active site and thus activation of the enzyme. ATP can activate the heterotetramer and the heterodimer composed of IDH3A and IDH3G subunits at low concentrations but inhibits their activities at high concentrations, whereas ATP exhibits only inhibitory effect on the heterodimer composed of IDH3A and IDH3B subunits. Regulatory subunit which plays a role in the allosteric regulation of the enzyme catalyzing the decarboxylation of isocitrate (ICT) into alpha-ketoglutarate. The heterodimer composed of the alpha (IDH3A) and beta (IDH3B) subunits and the heterodimer composed of the alpha (IDH3A) and gamma (IDH3G) subunits, have considerable basal activity but the full activity of the heterotetramer (containing two subunits of IDH3A, one of IDH3B and one of IDH3G) requires the assembly and cooperative function of both heterodimers. The polypeptide is Probable isocitrate dehydrogenase [NAD] gamma 2, mitochondrial (Mus musculus (Mouse)).